The following is a 98-amino-acid chain: UPF0473 protein lp_2273 (98 aa).

This sequence belongs to the UPF0473 family.

The polypeptide is UPF0473 protein lp_2273 (Lactiplantibacillus plantarum (strain ATCC BAA-793 / NCIMB 8826 / WCFS1) (Lactobacillus plantarum)).